The chain runs to 71 residues: Large ribosomal subunit protein bL31 (71 aa).

Residues Cys-16, Cys-18, Cys-38, and Cys-41 each coordinate Zn(2+).

This sequence belongs to the bacterial ribosomal protein bL31 family. Type A subfamily. In terms of assembly, part of the 50S ribosomal subunit. Zn(2+) is required as a cofactor.

In terms of biological role, binds the 23S rRNA. This Francisella tularensis subsp. mediasiatica (strain FSC147) protein is Large ribosomal subunit protein bL31.